Here is a 585-residue protein sequence, read N- to C-terminus: Aspartate--tRNA ligase (585 aa).

Glu169 contacts L-aspartate. The aspartate stretch occupies residues Gln193 to Lys196. Arg215 is a binding site for L-aspartate. ATP is bound by residues Arg215–Glu217 and Gln224. His443 serves as a coordination point for L-aspartate. ATP is bound at residue Glu478. Residue Arg485 participates in L-aspartate binding. Gly530 to Arg533 contacts ATP.

It belongs to the class-II aminoacyl-tRNA synthetase family. Type 1 subfamily. As to quaternary structure, homodimer.

The protein resides in the cytoplasm. The enzyme catalyses tRNA(Asp) + L-aspartate + ATP = L-aspartyl-tRNA(Asp) + AMP + diphosphate. Catalyzes the attachment of L-aspartate to tRNA(Asp) in a two-step reaction: L-aspartate is first activated by ATP to form Asp-AMP and then transferred to the acceptor end of tRNA(Asp). The chain is Aspartate--tRNA ligase from Pseudothermotoga lettingae (strain ATCC BAA-301 / DSM 14385 / NBRC 107922 / TMO) (Thermotoga lettingae).